The primary structure comprises 612 residues: Phosphopentomutase (612 aa).

Residue A2 is modified to N-acetylalanine. Alpha-D-glucose 1,6-bisphosphate is bound by residues R63 and S165. S165 (phosphoserine intermediate) is an active-site residue. S165, D322, D324, and D326 together coordinate Mg(2+). S165 carries the post-translational modification Phosphoserine. Alpha-D-glucose 1,6-bisphosphate-binding residues include D326, R327, T400, E424, and K438.

It belongs to the phosphohexose mutase family. In terms of assembly, monomer. It depends on Mg(2+) as a cofactor.

It is found in the cytoplasm. It localises to the cytosol. The enzyme catalyses alpha-D-ribose 1-phosphate = D-ribose 5-phosphate. It carries out the reaction 2-deoxy-alpha-D-ribose 1-phosphate = 2-deoxy-D-ribose 5-phosphate. It catalyses the reaction alpha-D-glucose 1-phosphate = alpha-D-glucose 6-phosphate. The catalysed reaction is O-phospho-L-seryl-[protein] + alpha-D-glucose 1-phosphate = alpha-D-glucose 1,6-bisphosphate + L-seryl-[protein]. The enzyme catalyses alpha-D-glucose 1,6-bisphosphate + L-seryl-[protein] = O-phospho-L-seryl-[protein] + alpha-D-glucose 6-phosphate. Its function is as follows. Catalyzes the conversion of the nucleoside breakdown products ribose-1-phosphate and deoxyribose-1-phosphate to the corresponding 5-phosphopentoses. Catalyzes the reversible isomerization of alpha-D-glucose 1-phosphate to alpha-D-glucose 6-phosphate but with a lower catalytic efficiency. The mechanism proceeds via the intermediate compound alpha-D-glucose 1,6-bisphosphate. In vitro, also has a low glucose 1,6-bisphosphate synthase activity which is most probably not physiologically relevant. The protein is Phosphopentomutase (PGM2) of Pongo abelii (Sumatran orangutan).